Here is a 494-residue protein sequence, read N- to C-terminus: Glutamate--tRNA ligase (494 aa).

Positions 9–19 (PSPTGDPHLGT) match the 'HIGH' region motif. The short motif at 250–254 (KLSKR) is the 'KMSKS' region element. ATP is bound at residue lysine 253.

Belongs to the class-I aminoacyl-tRNA synthetase family. Glutamate--tRNA ligase type 1 subfamily. Monomer.

The protein localises to the cytoplasm. The enzyme catalyses tRNA(Glu) + L-glutamate + ATP = L-glutamyl-tRNA(Glu) + AMP + diphosphate. Functionally, catalyzes the attachment of glutamate to tRNA(Glu) in a two-step reaction: glutamate is first activated by ATP to form Glu-AMP and then transferred to the acceptor end of tRNA(Glu). This Pseudoalteromonas translucida (strain TAC 125) protein is Glutamate--tRNA ligase.